Here is a 308-residue protein sequence, read N- to C-terminus: Aspartate carbamoyltransferase catalytic subunit (308 aa).

Carbamoyl phosphate contacts are provided by Arg55 and Thr56. Lys85 contacts L-aspartate. Carbamoyl phosphate-binding residues include Arg106, His135, and Gln138. The L-aspartate site is built by Arg168 and Arg229. Residues Leu267 and Pro268 each coordinate carbamoyl phosphate.

This sequence belongs to the aspartate/ornithine carbamoyltransferase superfamily. ATCase family. As to quaternary structure, heterododecamer (2C3:3R2) of six catalytic PyrB chains organized as two trimers (C3), and six regulatory PyrI chains organized as three dimers (R2).

It catalyses the reaction carbamoyl phosphate + L-aspartate = N-carbamoyl-L-aspartate + phosphate + H(+). The protein operates within pyrimidine metabolism; UMP biosynthesis via de novo pathway; (S)-dihydroorotate from bicarbonate: step 2/3. Its function is as follows. Catalyzes the condensation of carbamoyl phosphate and aspartate to form carbamoyl aspartate and inorganic phosphate, the committed step in the de novo pyrimidine nucleotide biosynthesis pathway. The chain is Aspartate carbamoyltransferase catalytic subunit from Laribacter hongkongensis (strain HLHK9).